A 316-amino-acid chain; its full sequence is Ribosomal RNA small subunit methyltransferase H (316 aa).

Residues 35–37 (GGH), Asp-55, Phe-79, Asp-101, and Gln-108 each bind S-adenosyl-L-methionine.

This sequence belongs to the methyltransferase superfamily. RsmH family.

The protein localises to the cytoplasm. It carries out the reaction cytidine(1402) in 16S rRNA + S-adenosyl-L-methionine = N(4)-methylcytidine(1402) in 16S rRNA + S-adenosyl-L-homocysteine + H(+). Specifically methylates the N4 position of cytidine in position 1402 (C1402) of 16S rRNA. In Vibrio vulnificus (strain CMCP6), this protein is Ribosomal RNA small subunit methyltransferase H.